We begin with the raw amino-acid sequence, 264 residues long: Ribosomal protein L11 methyltransferase (264 aa).

4 residues coordinate S-adenosyl-L-methionine: threonine 116, glycine 137, aspartate 159, and asparagine 200.

The protein belongs to the methyltransferase superfamily. PrmA family.

The protein resides in the cytoplasm. The enzyme catalyses L-lysyl-[protein] + 3 S-adenosyl-L-methionine = N(6),N(6),N(6)-trimethyl-L-lysyl-[protein] + 3 S-adenosyl-L-homocysteine + 3 H(+). In terms of biological role, methylates ribosomal protein L11. This is Ribosomal protein L11 methyltransferase from Thermotoga petrophila (strain ATCC BAA-488 / DSM 13995 / JCM 10881 / RKU-1).